The following is a 223-amino-acid chain: Noggin (223 aa).

An N-terminal signal peptide occupies residues 1–26 (MDHSQCLVTIYAAAVLLGLRLQQGSC). N-linked (GlcNAc...) asparagine glycosylation is present at Asn61. 4 disulfides stabilise this stretch: Cys146-Cys183, Cys169-Cys219, Cys175-Cys221, and Cys198-Cys206.

It belongs to the noggin family. In terms of assembly, homodimer.

The protein resides in the secreted. Functionally, inhibitor of bone morphogenetic proteins (BMP) signaling. Controls somitogenesis by sequestering the BMP-4 activity which in turn differentiates distinct subtypes of the mesoderm along the mediolateral axis. This Gallus gallus (Chicken) protein is Noggin (NOG).